Reading from the N-terminus, the 64-residue chain is Cytochrome c oxidase subunit 2 (64 aa).

At 1–14 (MAHPSQLGFQDAAS) the chain is on the mitochondrial intermembrane side. A helical transmembrane segment spans residues 15–45 (PMMEELLHFHDHALMVVFLISTFVLYIILTM). Topologically, residues 46-64 (LTTKLTDKLILESHEIEII) are mitochondrial matrix.

This sequence belongs to the cytochrome c oxidase subunit 2 family. As to quaternary structure, component of the cytochrome c oxidase (complex IV, CIV), a multisubunit enzyme composed of 14 subunits. The complex is composed of a catalytic core of 3 subunits MT-CO1, MT-CO2 and MT-CO3, encoded in the mitochondrial DNA, and 11 supernumerary subunits COX4I, COX5A, COX5B, COX6A, COX6B, COX6C, COX7A, COX7B, COX7C, COX8 and NDUFA4, which are encoded in the nuclear genome. The complex exists as a monomer or a dimer and forms supercomplexes (SCs) in the inner mitochondrial membrane with NADH-ubiquinone oxidoreductase (complex I, CI) and ubiquinol-cytochrome c oxidoreductase (cytochrome b-c1 complex, complex III, CIII), resulting in different assemblies (supercomplex SCI(1)III(2)IV(1) and megacomplex MCI(2)III(2)IV(2)). Found in a complex with TMEM177, COA6, COX18, COX20, SCO1 and SCO2. Interacts with TMEM177 in a COX20-dependent manner. Interacts with COX20. Interacts with COX16. Requires Cu cation as cofactor.

It localises to the mitochondrion inner membrane. The catalysed reaction is 4 Fe(II)-[cytochrome c] + O2 + 8 H(+)(in) = 4 Fe(III)-[cytochrome c] + 2 H2O + 4 H(+)(out). Its function is as follows. Component of the cytochrome c oxidase, the last enzyme in the mitochondrial electron transport chain which drives oxidative phosphorylation. The respiratory chain contains 3 multisubunit complexes succinate dehydrogenase (complex II, CII), ubiquinol-cytochrome c oxidoreductase (cytochrome b-c1 complex, complex III, CIII) and cytochrome c oxidase (complex IV, CIV), that cooperate to transfer electrons derived from NADH and succinate to molecular oxygen, creating an electrochemical gradient over the inner membrane that drives transmembrane transport and the ATP synthase. Cytochrome c oxidase is the component of the respiratory chain that catalyzes the reduction of oxygen to water. Electrons originating from reduced cytochrome c in the intermembrane space (IMS) are transferred via the dinuclear copper A center (CU(A)) of subunit 2 and heme A of subunit 1 to the active site in subunit 1, a binuclear center (BNC) formed by heme A3 and copper B (CU(B)). The BNC reduces molecular oxygen to 2 water molecules using 4 electrons from cytochrome c in the IMS and 4 protons from the mitochondrial matrix. The protein is Cytochrome c oxidase subunit 2 (mt-co2) of Geophagus steindachneri (Red hump earth eater).